The following is a 100-amino-acid chain: Small ribosomal subunit protein bS20 (100 aa).

A disordered region spans residues 79–100 (AAHQKSRLSAAVKQAIEPAPST).

This sequence belongs to the bacterial ribosomal protein bS20 family.

Functionally, binds directly to 16S ribosomal RNA. This Prochlorococcus marinus (strain MIT 9303) protein is Small ribosomal subunit protein bS20.